A 517-amino-acid polypeptide reads, in one-letter code: GMP synthase [glutamine-hydrolyzing] (517 aa).

The Glutamine amidotransferase type-1 domain occupies 11-202 (KIIVLDYGSQ…AFDVCHAEAN (192 aa)). The active-site Nucleophile is the Cys-88. Catalysis depends on residues His-176 and Glu-178. Positions 203 to 392 (WSMDDFITKQ…LGMPHSLVWR (190 aa)) constitute a GMPS ATP-PPase domain. 230 to 236 (SGGVDSS) lines the ATP pocket.

As to quaternary structure, homodimer.

The enzyme catalyses XMP + L-glutamine + ATP + H2O = GMP + L-glutamate + AMP + diphosphate + 2 H(+). It functions in the pathway purine metabolism; GMP biosynthesis; GMP from XMP (L-Gln route): step 1/1. Its function is as follows. Catalyzes the synthesis of GMP from XMP. The chain is GMP synthase [glutamine-hydrolyzing] (guaA) from Lacticaseibacillus rhamnosus (Lactobacillus rhamnosus).